Here is a 407-residue protein sequence, read N- to C-terminus: Imidazolonepropionase (407 aa).

Residues H68 and H70 each contribute to the Fe(3+) site. Zn(2+)-binding residues include H68 and H70. R77, Y140, and H173 together coordinate 4-imidazolone-5-propanoate. N-formimidoyl-L-glutamate is bound at residue Y140. H238 contacts Fe(3+). H238 lines the Zn(2+) pocket. Residue Q241 coordinates 4-imidazolone-5-propanoate. D313 lines the Fe(3+) pocket. D313 contacts Zn(2+). N-formimidoyl-L-glutamate is bound by residues N315 and G317. Residue T318 participates in 4-imidazolone-5-propanoate binding.

It belongs to the metallo-dependent hydrolases superfamily. HutI family. Zn(2+) serves as cofactor. It depends on Fe(3+) as a cofactor.

Its subcellular location is the cytoplasm. The enzyme catalyses 4-imidazolone-5-propanoate + H2O = N-formimidoyl-L-glutamate. It functions in the pathway amino-acid degradation; L-histidine degradation into L-glutamate; N-formimidoyl-L-glutamate from L-histidine: step 3/3. In terms of biological role, catalyzes the hydrolytic cleavage of the carbon-nitrogen bond in imidazolone-5-propanoate to yield N-formimidoyl-L-glutamate. It is the third step in the universal histidine degradation pathway. This is Imidazolonepropionase from Burkholderia ambifaria (strain MC40-6).